We begin with the raw amino-acid sequence, 427 residues long: Indole diterpene prenyltransferase penD (427 aa).

77–78 (YV) is an L-tryptophan binding site. Residues arginine 99, lysine 186, tyrosine 188, arginine 259, lysine 261, tyrosine 263, tyrosine 344, tyrosine 409, and tyrosine 413 each coordinate substrate.

The protein belongs to the tryptophan dimethylallyltransferase family.

The protein operates within secondary metabolite biosynthesis. In terms of biological role, indole diterpene prenyltransferase; part of the gene cluster that mediates the biosynthesis of the indole diterpenes penitrems. The geranylgeranyl diphosphate (GGPP) synthase penG catalyzes the first step in penitrem biosynthesis via conversion of farnesyl pyrophosphate and isopentyl pyrophosphate into geranylgeranyl pyrophosphate (GGPP). Condensation of indole-3-glycerol phosphate with GGPP by the prenyl transferase penC then forms 3-geranylgeranylindole (3-GGI). Epoxidation by the FAD-dependent monooxygenase penM leads to a epoxidized-GGI that is substrate of the terpene cyclase penB for cyclization to yield paspaline. Paspaline is subsequently converted to 13-desoxypaxilline by the cytochrome P450 monooxygenase penP, the latter being then converted to paxilline by the cytochrome P450 monooxygenase penQ. Paxilline is converted to beta-paxitriol via C-10 ketoreduction by the short-chain dehydrogenase PC-15 which can be monoprenylated at the C-20 by the indole diterpene prenyltransferase penD. A two-step elimination (acetylation and elimination) process performed by the O-acetyltransferase PC-16 and the P.simplicissimum ptmI-ortholog not yet identified in P.crustosum, leads to the production of the prenylated form of penijanthine. The FAD-linked oxidoreductase ptmO then converts the prenylated form of penijanthine into PC-M5 which is in turn transformed into PC-M4 by the aromatic dimethylallyltransferase PC-22. A series of oxidation steps involving 4 cytochrome P450 monooxygenases (PC-21, PC-05, PC-23, PC-20) and a FAD-dependent monooxygenase (PC-14) are required for the transformation of PC-M4 to penitrems A and E. Synthesis of these final products is proposed to proceed via penitrems D and C (PC-21, PC-05, PC-14) and penitrems B and F (PC-21, PC-05, PC-14, PC-23). In Penicillium crustosum (Blue mold fungus), this protein is Indole diterpene prenyltransferase penD.